We begin with the raw amino-acid sequence, 527 residues long: tRNA (uracil(54)-C(5))-methyltransferase (527 aa).

Residues 107–167 form the TRAM domain; the sequence is PFERFQEIEV…DTYALADFLE (61 aa). 4 residues coordinate [4Fe-4S] cluster: Cys182, Cys188, Cys191, and Cys276. Positions 347, 383, 404, and 451 each coordinate S-adenosyl-L-methionine. Residue Cys478 is the Nucleophile of the active site. Catalysis depends on Glu517, which acts as the Proton acceptor.

This sequence belongs to the class I-like SAM-binding methyltransferase superfamily. RNA M5U methyltransferase family.

It carries out the reaction uridine(54) in tRNA + S-adenosyl-L-methionine = 5-methyluridine(54) in tRNA + S-adenosyl-L-homocysteine + H(+). Catalyzes the formation of 5-methyl-uridine at position 54 (m5U54) in all tRNA. May also have a role in tRNA stabilization or maturation. The polypeptide is tRNA (uracil(54)-C(5))-methyltransferase (Schizosaccharomyces pombe (strain 972 / ATCC 24843) (Fission yeast)).